We begin with the raw amino-acid sequence, 259 residues long: MINPIAIKLGPLAIRWYSICIVTGLILAVYLTIREAPKKNIKSDDVLDFILIAFPLAIVGARLYYVIFDWDYYLKNPSEIPVIWHGGIAIYGGLLTGALVLFIFSYYRMIKPIDFLDVATPGVMLAQSIGRWGNFVNQEAYGKAVTQLNYLPDFIRKQMYIDGHYRTPTFLYESLWNLLGFIIIMILRRRPNLLKEGEVAFFYLIWYGSGRFVIEGMRTDSLMFASLRVSQWLSVLLVVVGVILIVIRRRNHAIPYYQC.

Helical transmembrane passes span 9-29, 48-68, 83-103, 114-133, 167-187, 197-217, and 227-247; these read LGPLAIRWYSICIVTGLILAV, DFILIAFPLAIVGARLYYVIF, IWHGGIAIYGGLLTGALVLFI, DFLDVATPGVMLAQSIGRWG, TPTFLYESLWNLLGFIIIMIL, GEVAFFYLIWYGSGRFVIEGM, and LRVSQWLSVLLVVVGVILIVI. Residue Arg131 coordinates a 1,2-diacyl-sn-glycero-3-phospho-(1'-sn-glycerol).

This sequence belongs to the Lgt family.

The protein localises to the cell membrane. It carries out the reaction L-cysteinyl-[prolipoprotein] + a 1,2-diacyl-sn-glycero-3-phospho-(1'-sn-glycerol) = an S-1,2-diacyl-sn-glyceryl-L-cysteinyl-[prolipoprotein] + sn-glycerol 1-phosphate + H(+). The protein operates within protein modification; lipoprotein biosynthesis (diacylglyceryl transfer). In terms of biological role, catalyzes the transfer of the diacylglyceryl group from phosphatidylglycerol to the sulfhydryl group of the N-terminal cysteine of a prolipoprotein, the first step in the formation of mature lipoproteins. The protein is Phosphatidylglycerol--prolipoprotein diacylglyceryl transferase of Streptococcus mutans serotype c (strain ATCC 700610 / UA159).